The primary structure comprises 348 residues: Protein pof5 (348 aa).

It to yeast YDR306C. In terms of assembly, interacts with skp1.

The protein localises to the mitochondrion. The polypeptide is Protein pof5 (pof5) (Schizosaccharomyces pombe (strain 972 / ATCC 24843) (Fission yeast)).